Consider the following 122-residue polypeptide: Proteasome assembly chaperone 3 (122 aa).

The residue at position 1 (Met1) is an N-acetylmethionine.

It belongs to the PSMG3 family. As to quaternary structure, homodimer. Interacts with PSMG4. Interacts directly with alpha and beta subunits of the 20S proteasome but dissociates before the formation of half-proteasomes, probably upon recruitment of POMP.

Functionally, chaperone protein which promotes assembly of the 20S proteasome. May cooperate with PSMG1-PSMG2 heterodimers to orchestrate the correct assembly of proteasomes. This chain is Proteasome assembly chaperone 3, found in Homo sapiens (Human).